The primary structure comprises 335 residues: DNA-directed RNA polymerase subunit alpha (335 aa).

An alpha N-terminal domain (alpha-NTD) region spans residues 1–233 (MIRDKISVSI…DLFIPFLHGE (233 aa)). The segment at 264-335 (KEKIAFKHIF…KRFAIDPPRN (72 aa)) is alpha C-terminal domain (alpha-CTD).

This sequence belongs to the RNA polymerase alpha chain family. As to quaternary structure, in plastids the minimal PEP RNA polymerase catalytic core is composed of four subunits: alpha, beta, beta', and beta''. When a (nuclear-encoded) sigma factor is associated with the core the holoenzyme is formed, which can initiate transcription.

The protein resides in the plastid. Its subcellular location is the chloroplast. It carries out the reaction RNA(n) + a ribonucleoside 5'-triphosphate = RNA(n+1) + diphosphate. DNA-dependent RNA polymerase catalyzes the transcription of DNA into RNA using the four ribonucleoside triphosphates as substrates. This Pinus koraiensis (Korean pine) protein is DNA-directed RNA polymerase subunit alpha.